A 441-amino-acid polypeptide reads, in one-letter code: Homogentisate 1,2-dioxygenase (441 aa).

His-287 serves as the catalytic Proton acceptor. Positions 330 and 336 each coordinate Fe cation. Residues Tyr-345 and His-366 each contribute to the homogentisate site. His-366 is a binding site for Fe cation.

The protein belongs to the homogentisate dioxygenase family. Hexamer; dimer of trimers. Fe cation serves as cofactor.

It carries out the reaction homogentisate + O2 = 4-maleylacetoacetate + H(+). The protein operates within amino-acid degradation; L-phenylalanine degradation; acetoacetate and fumarate from L-phenylalanine: step 4/6. In terms of biological role, involved in the catabolism of homogentisate (2,5-dihydroxyphenylacetate or 2,5-OH-PhAc), a central intermediate in the degradation of phenylalanine and tyrosine. Catalyzes the oxidative ring cleavage of the aromatic ring of homogentisate to yield maleylacetoacetate. This chain is Homogentisate 1,2-dioxygenase, found in Xanthomonas oryzae pv. oryzae (strain MAFF 311018).